Reading from the N-terminus, the 293-residue chain is Phosphatidylserine decarboxylase proenzyme (293 aa).

Catalysis depends on charge relay system; for autoendoproteolytic cleavage activity residues D90, H147, and S254. S254 serves as the catalytic Schiff-base intermediate with substrate; via pyruvic acid; for decarboxylase activity. S254 bears the Pyruvic acid (Ser); by autocatalysis mark.

The protein belongs to the phosphatidylserine decarboxylase family. PSD-B subfamily. Prokaryotic type I sub-subfamily. Heterodimer of a large membrane-associated beta subunit and a small pyruvoyl-containing alpha subunit. Requires pyruvate as cofactor. In terms of processing, is synthesized initially as an inactive proenzyme. Formation of the active enzyme involves a self-maturation process in which the active site pyruvoyl group is generated from an internal serine residue via an autocatalytic post-translational modification. Two non-identical subunits are generated from the proenzyme in this reaction, and the pyruvate is formed at the N-terminus of the alpha chain, which is derived from the carboxyl end of the proenzyme. The autoendoproteolytic cleavage occurs by a canonical serine protease mechanism, in which the side chain hydroxyl group of the serine supplies its oxygen atom to form the C-terminus of the beta chain, while the remainder of the serine residue undergoes an oxidative deamination to produce ammonia and the pyruvoyl prosthetic group on the alpha chain. During this reaction, the Ser that is part of the protease active site of the proenzyme becomes the pyruvoyl prosthetic group, which constitutes an essential element of the active site of the mature decarboxylase.

It localises to the cell membrane. The catalysed reaction is a 1,2-diacyl-sn-glycero-3-phospho-L-serine + H(+) = a 1,2-diacyl-sn-glycero-3-phosphoethanolamine + CO2. The protein operates within phospholipid metabolism; phosphatidylethanolamine biosynthesis; phosphatidylethanolamine from CDP-diacylglycerol: step 2/2. In terms of biological role, catalyzes the formation of phosphatidylethanolamine (PtdEtn) from phosphatidylserine (PtdSer). This is Phosphatidylserine decarboxylase proenzyme from Yersinia enterocolitica serotype O:8 / biotype 1B (strain NCTC 13174 / 8081).